The primary structure comprises 87 residues: Large ribosomal subunit protein bL31B (87 aa).

Belongs to the bacterial ribosomal protein bL31 family. Type B subfamily. Part of the 50S ribosomal subunit.

In Staphylococcus carnosus (strain TM300), this protein is Large ribosomal subunit protein bL31B.